We begin with the raw amino-acid sequence, 758 residues long: Maturase-like protein 2 (758 aa).

The protein localises to the plastid. Its subcellular location is the chloroplast. This chain is Maturase-like protein 2 (mat2), found in Euglena gracilis.